The chain runs to 651 residues: Aspartate--tRNA ligase, mitochondrial (651 aa).

The transit peptide at 1 to 44 (MFCWLSRLCGELSTPTRRTTQLIWSSAARSMVLSSQRIPELSSF) directs the protein to the mitochondrion. Thr-216 carries the phosphothreonine modification. Residue Ser-239 is modified to Phosphoserine. The interval 241–244 (QQFK) is aspartate. Position 263 (Arg-263) interacts with L-aspartate. 263-265 (RDE) contributes to the ATP binding site. Position 379 is an N6-acetyllysine (Lys-379). Glu-532 is a binding site for ATP. Arg-539 contributes to the L-aspartate binding site. 581-584 (GLDR) lines the ATP pocket.

The protein belongs to the class-II aminoacyl-tRNA synthetase family. Type 1 subfamily. Homodimer.

The protein localises to the mitochondrion matrix. It is found in the mitochondrion membrane. The catalysed reaction is tRNA(Asp) + L-aspartate + ATP = L-aspartyl-tRNA(Asp) + AMP + diphosphate. Catalyzes the attachment of aspartate to tRNA(Asp) in a two-step reaction: aspartate is first activated by ATP to form Asp-AMP and then transferred to the acceptor end of tRNA(Asp). The sequence is that of Aspartate--tRNA ligase, mitochondrial (DARS2) from Bos taurus (Bovine).